We begin with the raw amino-acid sequence, 146 residues long: Ribonuclease H (146 aa).

Residues 1–143 form the RNase H type-1 domain; sequence MKEIIIYTDG…CDQLARNAIK (143 aa). Positions 9, 47, 70, and 135 each coordinate Mg(2+).

Belongs to the RNase H family. Monomer. The cofactor is Mg(2+).

It is found in the cytoplasm. It carries out the reaction Endonucleolytic cleavage to 5'-phosphomonoester.. Its function is as follows. Endonuclease that specifically degrades the RNA of RNA-DNA hybrids. This is Ribonuclease H from Syntrophomonas wolfei subsp. wolfei (strain DSM 2245B / Goettingen).